Consider the following 98-residue polypeptide: uncharacterized protein (98 aa).

This is an uncharacterized protein from Homo sapiens (Human).